We begin with the raw amino-acid sequence, 63 residues long: MPQLDTSTWFLTILSVMLTLFTLLQPKISMHLYTPNPKPMPTKTQKQHSPWNTAWTKIYLPLL.

The helical transmembrane segment at Thr8–Leu24 threads the bilayer. Lys57 bears the N6-acetyllysine mark.

This sequence belongs to the ATPase protein 8 family. Component of the ATP synthase complex composed at least of ATP5F1A/subunit alpha, ATP5F1B/subunit beta, ATP5MC1/subunit c (homooctomer), MT-ATP6/subunit a, MT-ATP8/subunit 8, ATP5ME/subunit e, ATP5MF/subunit f, ATP5MG/subunit g, ATP5MK/subunit k, ATP5MJ/subunit j, ATP5F1C/subunit gamma, ATP5F1D/subunit delta, ATP5F1E/subunit epsilon, ATP5PF/subunit F6, ATP5PB/subunit b, ATP5PD/subunit d, ATP5PO/subunit OSCP. ATP synthase complex consists of a soluble F(1) head domain (subunits alpha(3) and beta(3)) - the catalytic core - and a membrane F(0) domain - the membrane proton channel (subunits c, a, 8, e, f, g, k and j). These two domains are linked by a central stalk (subunits gamma, delta, and epsilon) rotating inside the F1 region and a stationary peripheral stalk (subunits F6, b, d, and OSCP). Interacts with PRICKLE3.

It localises to the mitochondrion membrane. Subunit 8, of the mitochondrial membrane ATP synthase complex (F(1)F(0) ATP synthase or Complex V) that produces ATP from ADP in the presence of a proton gradient across the membrane which is generated by electron transport complexes of the respiratory chain. ATP synthase complex consist of a soluble F(1) head domain - the catalytic core - and a membrane F(1) domain - the membrane proton channel. These two domains are linked by a central stalk rotating inside the F(1) region and a stationary peripheral stalk. During catalysis, ATP synthesis in the catalytic domain of F(1) is coupled via a rotary mechanism of the central stalk subunits to proton translocation. In vivo, can only synthesize ATP although its ATP hydrolase activity can be activated artificially in vitro. Part of the complex F(0) domain. The protein is ATP synthase F(0) complex subunit 8 of Physeter macrocephalus (Sperm whale).